Consider the following 72-residue polypeptide: ATP synthase subunit c (72 aa).

The next 2 helical transmembrane spans lie at 5–25 (LLAA…IGIA) and 51–71 (AGLS…LLFV).

This sequence belongs to the ATPase C chain family. F-type ATPases have 2 components, F(1) - the catalytic core - and F(0) - the membrane proton channel. F(1) has five subunits: alpha(3), beta(3), gamma(1), delta(1), epsilon(1). F(0) has three main subunits: a(1), b(2) and c(10-14). The alpha and beta chains form an alternating ring which encloses part of the gamma chain. F(1) is attached to F(0) by a central stalk formed by the gamma and epsilon chains, while a peripheral stalk is formed by the delta and b chains.

The protein localises to the cell membrane. In terms of biological role, f(1)F(0) ATP synthase produces ATP from ADP in the presence of a proton or sodium gradient. F-type ATPases consist of two structural domains, F(1) containing the extramembraneous catalytic core and F(0) containing the membrane proton channel, linked together by a central stalk and a peripheral stalk. During catalysis, ATP synthesis in the catalytic domain of F(1) is coupled via a rotary mechanism of the central stalk subunits to proton translocation. Functionally, key component of the F(0) channel; it plays a direct role in translocation across the membrane. A homomeric c-ring of between 10-14 subunits forms the central stalk rotor element with the F(1) delta and epsilon subunits. The polypeptide is ATP synthase subunit c (Clostridium perfringens (strain ATCC 13124 / DSM 756 / JCM 1290 / NCIMB 6125 / NCTC 8237 / Type A)).